The following is a 426-amino-acid chain: Probable imidazolonepropionase (426 aa).

Positions 159 and 192 each coordinate 4-imidazolone-5-propanoate. Residue Tyr-159 participates in N-formimidoyl-L-glutamate binding. His-260 is a binding site for Fe(3+). Position 260 (His-260) interacts with Zn(2+). Glu-263 lines the 4-imidazolone-5-propanoate pocket. Asp-334 serves as a coordination point for Fe(3+). Zn(2+) is bound at residue Asp-334. Asn-336 provides a ligand contact to N-formimidoyl-L-glutamate.

The protein belongs to the metallo-dependent hydrolases superfamily. HutI family. Zn(2+) is required as a cofactor. Fe(3+) serves as cofactor.

The enzyme catalyses 4-imidazolone-5-propanoate + H2O = N-formimidoyl-L-glutamate. It participates in amino-acid degradation; L-histidine degradation into L-glutamate; N-formimidoyl-L-glutamate from L-histidine: step 3/3. The chain is Probable imidazolonepropionase (AMDHD1) from Homo sapiens (Human).